Reading from the N-terminus, the 283-residue chain is Glutamate racemase (283 aa).

Substrate contacts are provided by residues 28–29 (DS) and 60–61 (YG). The active-site Proton donor/acceptor is the Cys92. 93 to 94 (NT) lines the substrate pocket. Cys204 (proton donor/acceptor) is an active-site residue. 205–206 (TH) lines the substrate pocket.

Belongs to the aspartate/glutamate racemases family.

It catalyses the reaction L-glutamate = D-glutamate. The protein operates within cell wall biogenesis; peptidoglycan biosynthesis. Functionally, provides the (R)-glutamate required for cell wall biosynthesis. The chain is Glutamate racemase from Salmonella enteritidis PT4 (strain P125109).